The chain runs to 171 residues: PBAN-type neuropeptides (171 aa).

Positions 1–22 are cleaved as a signal peptide; the sequence is MFRLYFFFNVICIFLAIRSAIG. Residues 23–47 constitute a propeptide that is removed on maturation; it reads GEVPDATEQKINNFLASGKDSEDLS. Leu-59 carries the leucine amide modification. Residues 63 to 111 constitute a propeptide that is removed on maturation; the sequence is TIASELHDEMMDEIDDNPLYYSGESPQRVASEIAQGTPYVVLLLTGRVL. The disordered stretch occupies residues 120–151; that stretch reads HSTTPRLGRRDASSSNENNSRPPFAPRLGRNL. Residues Leu-126, Leu-147, and Leu-157 each carry the leucine amide modification. The propeptide occupies 160 to 171; sequence SFGAPVVDNFAY.

Belongs to the pyrokinin family.

The protein resides in the secreted. A hormone that controls sex pheromone production in females and pheromone responsiveness in male. Also mediates visceral muscle contractile activity (myotropic activity). In Aedes aegypti (Yellowfever mosquito), this protein is PBAN-type neuropeptides.